The following is a 114-amino-acid chain: Large ribosomal subunit protein bL21 (114 aa).

It belongs to the bacterial ribosomal protein bL21 family. As to quaternary structure, part of the 50S ribosomal subunit. Contacts protein L20.

This protein binds to 23S rRNA in the presence of protein L20. This Protochlamydia amoebophila (strain UWE25) protein is Large ribosomal subunit protein bL21.